The sequence spans 440 residues: tRNA(Ile)-lysidine synthase (440 aa).

An ATP-binding site is contributed by S25–S30.

The protein belongs to the tRNA(Ile)-lysidine synthase family.

It localises to the cytoplasm. The catalysed reaction is cytidine(34) in tRNA(Ile2) + L-lysine + ATP = lysidine(34) in tRNA(Ile2) + AMP + diphosphate + H(+). Ligates lysine onto the cytidine present at position 34 of the AUA codon-specific tRNA(Ile) that contains the anticodon CAU, in an ATP-dependent manner. Cytidine is converted to lysidine, thus changing the amino acid specificity of the tRNA from methionine to isoleucine. This Vibrio cholerae serotype O1 (strain ATCC 39315 / El Tor Inaba N16961) protein is tRNA(Ile)-lysidine synthase.